An 89-amino-acid chain; its full sequence is UPF0335 protein RPE_4107 (89 aa).

It belongs to the UPF0335 family.

The sequence is that of UPF0335 protein RPE_4107 from Rhodopseudomonas palustris (strain BisA53).